The chain runs to 155 residues: SsrA-binding protein (155 aa).

It belongs to the SmpB family.

It is found in the cytoplasm. Required for rescue of stalled ribosomes mediated by trans-translation. Binds to transfer-messenger RNA (tmRNA), required for stable association of tmRNA with ribosomes. tmRNA and SmpB together mimic tRNA shape, replacing the anticodon stem-loop with SmpB. tmRNA is encoded by the ssrA gene; the 2 termini fold to resemble tRNA(Ala) and it encodes a 'tag peptide', a short internal open reading frame. During trans-translation Ala-aminoacylated tmRNA acts like a tRNA, entering the A-site of stalled ribosomes, displacing the stalled mRNA. The ribosome then switches to translate the ORF on the tmRNA; the nascent peptide is terminated with the 'tag peptide' encoded by the tmRNA and targeted for degradation. The ribosome is freed to recommence translation, which seems to be the essential function of trans-translation. The protein is SsrA-binding protein of Streptococcus pneumoniae (strain 70585).